The chain runs to 222 residues: Large ribosomal subunit protein mL64 (222 aa).

Disordered stretches follow at residues 1-51 (MAAP…PRWQ), 136-170 (RRQQ…HVDP), and 182-222 (LEKQ…TPDS). Over residues 141-170 (ARREKAQADKERRARLQAEAQERLGYHVDP) the composition is skewed to basic and acidic residues. The stretch at 144-213 (EKAQADKERR…AAMAAAAAQD (70 aa)) forms a coiled coil. Positions 184–200 (KQHRKRLKEEKQRKKKE) match the Nuclear localization signal motif. The segment covering 203 to 212 (AAAMAAAAAQ) has biased composition (low complexity).

Belongs to the mitochondrion-specific ribosomal protein mL64 family. Component of the mitochondrial ribosome large subunit (39S) which comprises a 16S rRNA and about 50 distinct proteins. Interacts with GADD45A, GADD45B and GADD45G. Interacts with NR4A1 via the NR4A1 AB domain. Interacts with ATAD3A and ATAD3B.

The protein localises to the mitochondrion. The protein resides in the nucleus. In terms of biological role, acts as a negative regulator of G1 to S cell cycle phase progression by inhibiting cyclin-dependent kinases. Inhibitory effects are additive with GADD45 proteins but also occur in the absence of GADD45 proteins. Acts as a repressor of the orphan nuclear receptor NR4A1 by inhibiting AB domain-mediated transcriptional activity. May be involved in the hormone-mediated regulation of NR4A1 transcriptional activity. May play a role in mitochondrial protein synthesis. This chain is Large ribosomal subunit protein mL64 (GADD45GIP1), found in Bos taurus (Bovine).